The following is an 87-amino-acid chain: Toxin Css39.8 (87 aa).

The N-terminal stretch at 1 to 19 (MNSLLMITACFFLIGTVWA) is a signal peptide. Residues 20–85 (KEGYLVNKST…TYPLPNKSCS (66 aa)) form the LCN-type CS-alpha/beta domain. Intrachain disulfides connect Cys-31–Cys-84, Cys-35–Cys-60, Cys-44–Cys-65, and Cys-48–Cys-67.

The protein belongs to the long (4 C-C) scorpion toxin superfamily. Sodium channel inhibitor family. Beta subfamily. In terms of tissue distribution, expressed by the venom gland.

The protein localises to the secreted. In terms of biological role, beta toxins bind voltage-independently at site-4 of sodium channels (Nav) and shift the voltage of activation toward more negative potentials thereby affecting sodium channel activation and promoting spontaneous and repetitive firing. This toxin is lethal to crustaceans (freshwater crayfish (Cambarellus montezumae spp.)), it provokes a reversible paralysis to insects (crickets (Achaeta spp.)), but is not toxic to mice. At high concentrations, it does displace the (beta) mammal-specific toxin Cn2 from rat brain synaptosomes. The chain is Toxin Css39.8 from Centruroides suffusus (Durango bark scorpion).